Consider the following 369-residue polypeptide: LIM homeobox transcription factor 1-beta (369 aa).

LIM zinc-binding domains follow at residues 23–73 and 82–135; these read CEGC…CKQD and CSGC…CKGD. The interval 143-196 is disordered; that stretch reads LSSVSPDESDSVKSEDEDGDMKPAKGQGSQSKGGGDDGKDPRRPKRPRTILTTQ. The homeobox DNA-binding region spans 186–245; sequence PKRPRTILTTQQRRAFKASFEVSSKPCRKVRETLAAETGLSVRVVQVWFQNQRAKMKKLA.

Interacts with DHX9.

It is found in the nucleus. Its function is as follows. Transcription factor involved in the regulation of podocyte-expressed genes. Essential for the specification of dorsal limb fate at both the zeugopodal and autopodal levels. The sequence is that of LIM homeobox transcription factor 1-beta (LMX1B) from Mesocricetus auratus (Golden hamster).